Reading from the N-terminus, the 278-residue chain is MHPDSQLETAVKNGFDPKSLYSTELTKVNEPARTILEQYSKIPAEKVLQHVKDLKDRAFEVFPYACIGQASFLELSIASSPCYPEMLDRVKKGDRLLDLGCAFGQELRQLIYDGAPSQNLYGTDLRPEFLELGLDLFLDRSFIKSHFIDADVLDDKSALVTQLTGELNIVYISLFLHVFDFETQIKVAKRVLDLLAPKAGSLIVCRVVACRDQAIGNATNARLPYYYHDLASWNRLWERVQEETGLKLKVDNWEQDDALAKKHPLEGIYMLGSSIRRE.

S-adenosyl-L-methionine contacts are provided by residues aspartate 124–leucine 125, aspartate 151–valine 152, and valine 152–leucine 153.

Belongs to the class I-like SAM-binding methyltransferase superfamily. As to quaternary structure, homodimer.

It participates in secondary metabolite biosynthesis; terpenoid biosynthesis. In terms of biological role, methyltransferase; part of the gene cluster that mediates the biosynthesis of andrastins, meroterpenoid compounds that exhibit inhibitory activity against ras farnesyltransferase, suggesting that they could be promising leads for antitumor agents. The first step of the pathway is the synthesis of 3,5-dimethylorsellinic acid (DMOA) by the polyketide synthase adrD via condensation of one acetyl-CoA starter unit with 3 malonyl-CoA units and 2 methylations. DMAO is then converted to farnesyl-DMAO by the prenyltransferase adrG. The methyltransferase adrK catalyzes the methylation of the carboxyl group of farnesyl-DMAO to farnesyl-DMAO methyl ester which is further converted to epoxyfarnesyl-DMAO methyl ester by the FAD-dependent monooxygenase adrH. The terpene cyclase adrI then catalyzes the carbon skeletal rearrangement to generate the andrastin E, the first compound in the pathway having the andrastin scaffold, with the tetracyclic ring system. The post-cyclization tailoring enzymes adrF, adrE, adrJ, and adrA, are involved in the conversion of andrastin E into andrastin A. The short chain dehydrogenase adrF is responsible for the oxidation of the C-3 a hydroxyl group of andrastin E to yield the corresponding ketone, andrastin D. The ketoreductase adrE stereoselectively reduces the carbonyl moiety to reverse the stereochemistry of the C-3 position to yield andrastin F. The acetyltransferase adrJ is the acetyltransferase that attaches the acetyl group to the C-3 hydroxyl group of andrastin F to yield andrastin C. Finally, the cytochrome P450 monooxygenase adrA catalyzes two sequential oxidation reactions of the C-23 methyl group, to generate the corresponding alcohol andrastin B, and aldehyde andrastin A. This is Methyltransferase adrK from Penicillium roqueforti.